A 496-amino-acid chain; its full sequence is Legumin (496 aa).

The first 21 residues, 1 to 21 (MAKLLALSLSFCFLLFGTCFA), serve as a signal peptide directing secretion. Intrachain disulfides connect C31-C64 and C107-C318. The Cupin type-1 1 domain maps to 36-230 (LNALKPDNRI…ALNVNRRIVN (195 aa)). Positions 240–311 (EKGAIVKVKG…RGGSKSQRDN (72 aa)) are disordered. A compositionally biased stretch (basic and acidic residues) spans 257-269 (PEKEPRQKRGSRQ). The region spanning 324–453 (QNIGSSSSPD…INVCQKKLLQ (130 aa)) is the Cupin type-1 2 domain.

Belongs to the 11S seed storage protein (globulins) family. Hexamer; each subunit is composed of an acidic and a basic chain derived from a single precursor and linked by a disulfide bond.

Functionally, seed storage protein. Alpha-amylase inhibitor. The sequence is that of Legumin from Cicer arietinum (Chickpea).